The chain runs to 879 residues: Alanine--tRNA ligase (879 aa).

His-566, His-570, Cys-668, and His-672 together coordinate Zn(2+).

The protein belongs to the class-II aminoacyl-tRNA synthetase family. The cofactor is Zn(2+).

It localises to the cytoplasm. The enzyme catalyses tRNA(Ala) + L-alanine + ATP = L-alanyl-tRNA(Ala) + AMP + diphosphate. Its function is as follows. Catalyzes the attachment of alanine to tRNA(Ala) in a two-step reaction: alanine is first activated by ATP to form Ala-AMP and then transferred to the acceptor end of tRNA(Ala). Also edits incorrectly charged Ser-tRNA(Ala) and Gly-tRNA(Ala) via its editing domain. The polypeptide is Alanine--tRNA ligase (Clostridium kluyveri (strain ATCC 8527 / DSM 555 / NBRC 12016 / NCIMB 10680 / K1)).